Consider the following 158-residue polypeptide: Ribonuclease H (158 aa).

The RNase H type-1 domain maps to 2-143 (PEKIIELFTD…VDALLNRVMD (142 aa)). Mg(2+) is bound by residues Asp-11, Glu-49, Asp-71, and Asp-135.

It belongs to the RNase H family. In terms of assembly, monomer. Mg(2+) serves as cofactor.

The protein resides in the cytoplasm. The catalysed reaction is Endonucleolytic cleavage to 5'-phosphomonoester.. Its function is as follows. Endonuclease that specifically degrades the RNA of RNA-DNA hybrids. This chain is Ribonuclease H, found in Acidithiobacillus ferrooxidans (strain ATCC 23270 / DSM 14882 / CIP 104768 / NCIMB 8455) (Ferrobacillus ferrooxidans (strain ATCC 23270)).